The sequence spans 281 residues: Complement C1q tumor necrosis factor-related protein 1 (281 aa).

The signal sequence occupies residues 1-25 (MGSCAQGFMLGCCLLLAITWGPILS). The disordered stretch occupies residues 35–68 (QEWEETEELPSPLDPVTRPEETREKYSPRQGEDL). Over residues 51-66 (TRPEETREKYSPRQGE) the composition is skewed to basic and acidic residues. An N-linked (GlcNAc...) asparagine glycan is attached at Asn-93. Residues 99–140 (GEKGDRGDRGLQGKYGKIGSTGPRGHVGPKGQKGSIGAPGNH) form the Collagen-like domain. The disordered stretch occupies residues 107 to 136 (RGLQGKYGKIGSTGPRGHVGPKGQKGSIGA). The C1q domain maps to 141–281 (CKSQYAAFSV…GYLVKPASEP (141 aa)).

It is found in the secreted. This is Complement C1q tumor necrosis factor-related protein 1 (C1qtnf1) from Mus musculus (Mouse).